Consider the following 30-residue polypeptide: Photosystem II reaction center protein Psb30 (30 aa).

Residues 1-6 (EVIAQL) lie on the Lumenal side of the membrane. A helical transmembrane segment spans residues 7 to 21 (TMIAMIGIAGPMIIF). The Cytoplasmic portion of the chain corresponds to 22 to 30 (LLAVRRGNL).

This sequence belongs to the Psb30/Ycf12 family. PSII is composed of 1 copy each of membrane proteins PsbA, PsbB, PsbC, PsbD, PsbE, PsbF, PsbH, PsbI, PsbJ, PsbK, PsbL, PsbM, PsbT, PsbX, PsbY, PsbZ, Psb30/Ycf12, peripheral proteins PsbO, CyanoQ (PsbQ), PsbU, PsbV and a large number of cofactors. It forms dimeric complexes. PSII binds multiple chlorophylls, carotenoids and specific lipids. is required as a cofactor.

The protein localises to the cellular thylakoid membrane. A core subunit of photosystem II (PSII), probably helps stabilize the reaction center. PSII is a light-driven water plastoquinone oxidoreductase, using light energy to abstract electrons from H(2)O, generating a proton gradient subsequently used for ATP formation. The protein is Photosystem II reaction center protein Psb30 of Thermostichus vulcanus (Synechococcus vulcanus).